A 398-amino-acid chain; its full sequence is Acetate kinase (398 aa).

Asn8 serves as a coordination point for Mg(2+). Residue Lys15 participates in ATP binding. Arg89 provides a ligand contact to substrate. The active-site Proton donor/acceptor is the Asp146. ATP contacts are provided by residues 206 to 210, 283 to 285, and 331 to 335; these read HIGNG, DMR, and GMGEN. Glu383 is a binding site for Mg(2+).

The protein belongs to the acetokinase family. Homodimer. Requires Mg(2+) as cofactor. The cofactor is Mn(2+).

The protein resides in the cytoplasm. The catalysed reaction is acetate + ATP = acetyl phosphate + ADP. It functions in the pathway metabolic intermediate biosynthesis; acetyl-CoA biosynthesis; acetyl-CoA from acetate: step 1/2. Its function is as follows. Catalyzes the formation of acetyl phosphate from acetate and ATP. Can also catalyze the reverse reaction. In Streptococcus pyogenes serotype M49 (strain NZ131), this protein is Acetate kinase.